The sequence spans 377 residues: DNA replication and repair protein RecF (377 aa).

30–37 lines the ATP pocket; it reads GQNAQGKS.

The protein belongs to the RecF family.

It is found in the cytoplasm. The RecF protein is involved in DNA metabolism; it is required for DNA replication and normal SOS inducibility. RecF binds preferentially to single-stranded, linear DNA. It also seems to bind ATP. The polypeptide is DNA replication and repair protein RecF (Cyanothece sp. (strain PCC 7425 / ATCC 29141)).